The primary structure comprises 218 residues: Eukaryotic translation initiation factor 3 subunit K (218 aa).

N-acetylalanine is present on A2. Phosphothreonine is present on T28. The PCI domain maps to 42 to 204 (YDLEANLAVL…SIKPKNIVEK (163 aa)). At S217 the chain carries Phosphoserine.

Belongs to the eIF-3 subunit K family. As to quaternary structure, component of the eukaryotic translation initiation factor 3 (eIF-3) complex, which is composed of 13 subunits: EIF3A, EIF3B, EIF3C, EIF3D, EIF3E, EIF3F, EIF3G, EIF3H, EIF3I, EIF3J, EIF3K, EIF3L and EIF3M. The eIF-3 complex appears to include 3 stable modules: module A is composed of EIF3A, EIF3B, EIF3G and EIF3I; module B is composed of EIF3F, EIF3H, and EIF3M; and module C is composed of EIF3C, EIF3D, EIF3E, EIF3K and EIF3L. EIF3C of module C binds EIF3B of module A and EIF3H of module B, thereby linking the three modules. EIF3J is a labile subunit that binds to the eIF-3 complex via EIF3B. The eIF-3 complex interacts with RPS6KB1 under conditions of nutrient depletion. Mitogenic stimulation leads to binding and activation of a complex composed of MTOR and RPTOR, leading to phosphorylation and release of RPS6KB1 and binding of EIF4B to eIF-3. Identified in a HCV IRES-mediated translation complex, at least composed of EIF3C, IGF2BP1, RPS3 and HCV RNA-replicon. Interacts with ALKBH4, IFIT1 and IFIT2.

Its subcellular location is the nucleus. It localises to the cytoplasm. Functionally, component of the eukaryotic translation initiation factor 3 (eIF-3) complex, which is required for several steps in the initiation of protein synthesis. The eIF-3 complex associates with the 40S ribosome and facilitates the recruitment of eIF-1, eIF-1A, eIF-2:GTP:methionyl-tRNAi and eIF-5 to form the 43S pre-initiation complex (43S PIC). The eIF-3 complex stimulates mRNA recruitment to the 43S PIC and scanning of the mRNA for AUG recognition. The eIF-3 complex is also required for disassembly and recycling of post-termination ribosomal complexes and subsequently prevents premature joining of the 40S and 60S ribosomal subunits prior to initiation. The eIF-3 complex specifically targets and initiates translation of a subset of mRNAs involved in cell proliferation, including cell cycling, differentiation and apoptosis, and uses different modes of RNA stem-loop binding to exert either translational activation or repression. In Mus musculus (Mouse), this protein is Eukaryotic translation initiation factor 3 subunit K (Eif3k).